A 508-amino-acid polypeptide reads, in one-letter code: Methionine--tRNA ligase (508 aa).

The short motif at 12–22 is the 'HIGH' region element; the sequence is YYVNDVAHIGH. Residues 295–299 carry the 'KMSKS' region motif; that stretch reads KISKS. Lys298 is a binding site for ATP.

The protein belongs to the class-I aminoacyl-tRNA synthetase family. MetG type 2B subfamily. Monomer.

The protein localises to the cytoplasm. The catalysed reaction is tRNA(Met) + L-methionine + ATP = L-methionyl-tRNA(Met) + AMP + diphosphate. Functionally, is required not only for elongation of protein synthesis but also for the initiation of all mRNA translation through initiator tRNA(fMet) aminoacylation. The sequence is that of Methionine--tRNA ligase (metG) from Rickettsia prowazekii (strain Madrid E).